The primary structure comprises 441 residues: MNKDLQKVGIVSLGCPKALVDSERILTRLRAEGYEVSPTYDDANVVIVNTCGFLDSAKAESLEAIGEAMAQNGRVIVTGCMGGDEAAIRSAHPGVLAVTGPQQYERVVAAVHEAAPPAHDPYLDLVPAEGIRLTPRHYAYLKISEGCNHGCTFCIIPDLRGKLVSRPASKVLMEAEKLAEAGVRELLVISQDTSAYGVDLRHGESPWHGAPVKARMTELCSALGELGIWVRLHYVYPYPFVDEIIPLMAEGKILPYLDIPFQHASPKILEAMKRPAAQDRTLERIRRWRTICPDIALRSTFIVGFPGETEDDFQQLLDWMGEAELDRVGCFKYEAVAGAKANALADAVPEEVKEERWHRFMAAQQEISERRLAQKVGTVIEAIIDEVDEEGAIGRTKGDAPEIDGSLFLNGETSLAPGDIVPVLIEHADEYDLWGSLAGKD.

The region spanning 6–116 (QKVGIVSLGC…VVAAVHEAAP (111 aa)) is the MTTase N-terminal domain. [4Fe-4S] cluster is bound by residues cysteine 15, cysteine 51, cysteine 80, cysteine 147, cysteine 151, and cysteine 154. The Radical SAM core domain occupies 133 to 370 (LTPRHYAYLK…MAAQQEISER (238 aa)). Residues 373-439 (AQKVGTVIEA…EYDLWGSLAG (67 aa)) enclose the TRAM domain.

The protein belongs to the methylthiotransferase family. RimO subfamily. [4Fe-4S] cluster is required as a cofactor.

It localises to the cytoplasm. The catalysed reaction is L-aspartate(89)-[ribosomal protein uS12]-hydrogen + (sulfur carrier)-SH + AH2 + 2 S-adenosyl-L-methionine = 3-methylsulfanyl-L-aspartate(89)-[ribosomal protein uS12]-hydrogen + (sulfur carrier)-H + 5'-deoxyadenosine + L-methionine + A + S-adenosyl-L-homocysteine + 2 H(+). Its function is as follows. Catalyzes the methylthiolation of an aspartic acid residue of ribosomal protein uS12. The protein is Ribosomal protein uS12 methylthiotransferase RimO of Rhodospirillum rubrum (strain ATCC 11170 / ATH 1.1.1 / DSM 467 / LMG 4362 / NCIMB 8255 / S1).